A 720-amino-acid polypeptide reads, in one-letter code: Polyribonucleotide nucleotidyltransferase (720 aa).

Mg(2+) contacts are provided by Asp-484 and Asp-490. The KH domain maps to 551-610 (PRMYKINIDPSKIGSVIGSGGKTIRSIIEQTNTTVDIENDGTVVIGATDEASAKKAIKII). The 69-residue stretch at 620-688 (GSIYTGKVTR…NQGRVNLSHR (69 aa)) folds into the S1 motif domain. Residues 697–720 (PISRNRDSQPRRPGPFRPSDRSNS) are disordered.

This sequence belongs to the polyribonucleotide nucleotidyltransferase family. It depends on Mg(2+) as a cofactor.

It localises to the cytoplasm. It carries out the reaction RNA(n+1) + phosphate = RNA(n) + a ribonucleoside 5'-diphosphate. In terms of biological role, involved in mRNA degradation. Catalyzes the phosphorolysis of single-stranded polyribonucleotides processively in the 3'- to 5'-direction. The sequence is that of Polyribonucleotide nucleotidyltransferase from Dehalococcoides mccartyi (strain CBDB1).